A 127-amino-acid chain; its full sequence is Large ribosomal subunit protein bL17 (127 aa).

It belongs to the bacterial ribosomal protein bL17 family. In terms of assembly, part of the 50S ribosomal subunit. Contacts protein L32.

In Stenotrophomonas maltophilia (strain K279a), this protein is Large ribosomal subunit protein bL17.